The sequence spans 322 residues: Glutamyl-Q tRNA(Asp) synthetase (322 aa).

Residues 28–32 and Glu64 each bind L-glutamate; that span reads RFAPS. Positions 31–41 match the 'HIGH' region motif; sequence PSPSGDLHFGS. 4 residues coordinate Zn(2+): Cys120, Cys122, Tyr134, and Cys138. L-glutamate-binding residues include Tyr191 and Arg209. Residues 247 to 251 carry the 'KMSKS' region motif; the sequence is KLSKQ. Lys250 is a binding site for ATP.

The protein belongs to the class-I aminoacyl-tRNA synthetase family. GluQ subfamily. The cofactor is Zn(2+).

In terms of biological role, catalyzes the tRNA-independent activation of glutamate in presence of ATP and the subsequent transfer of glutamate onto a tRNA(Asp). Glutamate is transferred on the 2-amino-5-(4,5-dihydroxy-2-cyclopenten-1-yl) moiety of the queuosine in the wobble position of the QUC anticodon. The sequence is that of Glutamyl-Q tRNA(Asp) synthetase from Pectobacterium atrosepticum (strain SCRI 1043 / ATCC BAA-672) (Erwinia carotovora subsp. atroseptica).